The following is a 145-amino-acid chain: Basic phospholipase A2 beta-bungarotoxin A-AL1 chain (145 aa).

Residues 1-17 form the signal peptide; that stretch reads MLIFLWCGAVCVSLLGA. Positions 18 to 25 are excised as a propeptide; sequence ANIPPHPL. 5 disulfides stabilise this stretch: Cys52–Cys144, Cys54–Cys70, Cys76–Cys118, Cys86–Cys111, and Cys104–Cys116. Positions 53, 55, and 57 each coordinate Ca(2+). The active site involves His73. Residue Asp119 is part of the active site.

The protein belongs to the phospholipase A2 family. Group I subfamily. G49 sub-subfamily. In terms of assembly, heterodimer; disulfide-linked. The A chains have phospholipase A2 activity and the B chains show homology with the basic protease inhibitors. It depends on Ca(2+) as a cofactor. This enzyme lacks one of the seven disulfide bonds found in similar PLA2 proteins. Expressed by the venom gland.

It localises to the secreted. The enzyme catalyses a 1,2-diacyl-sn-glycero-3-phosphocholine + H2O = a 1-acyl-sn-glycero-3-phosphocholine + a fatty acid + H(+). Functionally, snake venom phospholipase A2 (PLA2) that inhibits neuromuscular transmission by blocking acetylcholine release from the nerve termini. PLA2 catalyzes the calcium-dependent hydrolysis of the 2-acyl groups in 3-sn-phosphoglycerides. The chain is Basic phospholipase A2 beta-bungarotoxin A-AL1 chain from Bungarus multicinctus (Many-banded krait).